A 400-amino-acid chain; its full sequence is 3-phenylpropionate/cinnamic acid dioxygenase ferredoxin--NAD(+) reductase component (400 aa).

Thr5 to Asp36 is an FAD binding site. Ser146–Glu174 lines the NAD(+) pocket.

This sequence belongs to the bacterial ring-hydroxylating dioxygenase ferredoxin reductase family. As to quaternary structure, this dioxygenase system consists of four proteins: the two subunits of the hydroxylase component (HcaE and HcaF), a ferredoxin (HcaC) and a ferredoxin reductase (HcaD). It depends on FAD as a cofactor.

The catalysed reaction is 2 reduced [2Fe-2S]-[ferredoxin] + NAD(+) + H(+) = 2 oxidized [2Fe-2S]-[ferredoxin] + NADH. Its pathway is aromatic compound metabolism; 3-phenylpropanoate degradation. Part of the multicomponent 3-phenylpropionate dioxygenase, that converts 3-phenylpropionic acid (PP) and cinnamic acid (CI) into 3-phenylpropionate-dihydrodiol (PP-dihydrodiol) and cinnamic acid-dihydrodiol (CI-dihydrodiol), respectively. The protein is 3-phenylpropionate/cinnamic acid dioxygenase ferredoxin--NAD(+) reductase component of Escherichia coli O17:K52:H18 (strain UMN026 / ExPEC).